The chain runs to 481 residues: Protein DETOXIFICATION 12 (481 aa).

The next 12 membrane-spanning stretches (helical) occupy residues 38–58, 76–96, 117–137, 154–174, 187–207, 214–234, 267–287, 296–316, 336–356, 380–400, 415–435, and 438–458; these read LIFF…LQIV, LASS…SCAL, YTAM…WFNM, AGKY…LQPL, LLIT…FLVY, LGGA…LGSF, AAMI…SGLL, VLSV…AIAA, IVVY…SMSL, MAPL…LSGI, LGAF…WIHL, and VGLW…LALV.

The protein belongs to the multi antimicrobial extrusion (MATE) (TC 2.A.66.1) family.

It is found in the membrane. This is Protein DETOXIFICATION 12 from Arabidopsis thaliana (Mouse-ear cress).